Here is a 920-residue protein sequence, read N- to C-terminus: KIN14B-interacting protein At4g14310 (920 aa).

Residues 1-10 (MSASTNRRRL) are compositionally biased toward basic residues. Disordered regions lie at residues 1–199 (MSAS…EKST) and 309–375 (IDGP…EKPS). The span at 35 to 54 (PISSKNSNPALQKSLSSKEN) shows a compositional bias: polar residues. The segment covering 90–105 (TRSTSSGLRGRSSSPS) has biased composition (low complexity). Positions 112 to 135 (SDLRKRNESRVIGEKGESGQDKKS) are enriched in basic and acidic residues. 2 stretches are compositionally biased toward polar residues: residues 137–147 (LKSSGFKQGTS) and 166–184 (CPVN…NSIS). Basic and acidic residues predominate over residues 327-337 (LNKEELEDRLL). The span at 345 to 355 (SRTQSKTSSHV) shows a compositional bias: polar residues. Positions 357–374 (KGHDSVESNKAVNAEEKP) are enriched in basic and acidic residues. Positions 435–463 (TEILRANEALEEIDDEENREEMELEEIDD) form a coiled coil.

Interacts with KIN14B, CDKA-1, CKS1 and CKS2.

Its subcellular location is the cytoplasm. Its function is as follows. Might be involved in division plane determination. The sequence is that of KIN14B-interacting protein At4g14310 from Arabidopsis thaliana (Mouse-ear cress).